Here is a 298-residue protein sequence, read N- to C-terminus: Tyrosine recombinase XerC (298 aa).

A Core-binding (CB) domain is found at 1 to 84 (MNHIQEAFLN…TLRTFYEYWM (84 aa)). Positions 105 to 286 (YLPQFFYEEE…SNQQLRKVYL (182 aa)) constitute a Tyr recombinase domain. Active-site residues include arginine 145, lysine 169, histidine 238, arginine 241, and histidine 264. Catalysis depends on tyrosine 273, which acts as the O-(3'-phospho-DNA)-tyrosine intermediate.

The protein belongs to the 'phage' integrase family. XerC subfamily. In terms of assembly, forms a cyclic heterotetrameric complex composed of two molecules of XerC and two molecules of XerD.

The protein resides in the cytoplasm. Site-specific tyrosine recombinase, which acts by catalyzing the cutting and rejoining of the recombining DNA molecules. The XerC-XerD complex is essential to convert dimers of the bacterial chromosome into monomers to permit their segregation at cell division. It also contributes to the segregational stability of plasmids. This chain is Tyrosine recombinase XerC, found in Staphylococcus aureus (strain bovine RF122 / ET3-1).